The primary structure comprises 917 residues: Hexokinase-2 (917 aa).

Position 1 is an N-acetylmethionine (methionine 1). Residues methionine 1–glutamine 16 are mitochondrial-binding peptide (MBP). Hexokinase domains lie at glutamine 16 to alanine 458 and alanine 464 to alanine 906. ATP contacts are provided by residues arginine 30 and aspartate 84–asparagine 89. The tract at residues aspartate 73 to valine 207 is hexokinase small subdomain 1. Aspartate 84–threonine 88 contributes to the D-glucose 6-phosphate binding site. Residues serine 155 to phenylalanine 156, threonine 172 to lysine 173, and asparagine 208 to aspartate 209 contribute to the D-glucose site. The tract at residues asparagine 208–aspartate 447 is hexokinase large subdomain 1. D-glucose 6-phosphate contacts are provided by aspartate 209 and threonine 232. Residues asparagine 235, glutamate 260, and glutamine 291–glutamate 294 each bind D-glucose. Aspartate 413–serine 415 lines the D-glucose 6-phosphate pocket. Lysine 425–arginine 426 lines the ATP pocket. D-glucose 6-phosphate contacts are provided by residues serine 449 and aspartate 532–threonine 536. The segment at aspartate 521 to valine 655 is hexokinase small subdomain 2. ATP is bound at residue aspartate 532 to asparagine 537. D-glucose is bound by residues serine 603 to phenylalanine 604, threonine 620 to lysine 621, and asparagine 656 to aspartate 657. The tract at residues asparagine 656–aspartate 895 is hexokinase large subdomain 2. 2 residues coordinate D-glucose 6-phosphate: aspartate 657 and threonine 680. Residue threonine 680 coordinates ATP. D-glucose is bound by residues serine 682–asparagine 683, glutamate 708, and glutamine 739–glutamate 742. ATP-binding positions include glycine 747–methionine 748, threonine 784–serine 788, and threonine 863–leucine 867. Residues aspartate 861–threonine 863 and serine 897 each bind D-glucose 6-phosphate.

The protein belongs to the hexokinase family. In terms of assembly, monomer. Interacts with TIGAR; the interaction increases hexokinase activity in a hypoxia- and HIF1A-dependent manner.

The protein resides in the mitochondrion outer membrane. Its subcellular location is the cytoplasm. It is found in the cytosol. The enzyme catalyses a D-hexose + ATP = a D-hexose 6-phosphate + ADP + H(+). It catalyses the reaction D-fructose + ATP = D-fructose 6-phosphate + ADP + H(+). It carries out the reaction D-glucose + ATP = D-glucose 6-phosphate + ADP + H(+). The protein operates within carbohydrate metabolism; hexose metabolism. It functions in the pathway carbohydrate degradation; glycolysis; D-glyceraldehyde 3-phosphate and glycerone phosphate from D-glucose: step 1/4. Its activity is regulated as follows. Hexokinase activity is specifically inhibited by 2,6-disubstituted glucosamines. Catalyzes the phosphorylation of hexose, such as D-glucose and D-fructose, to hexose 6-phosphate (D-glucose 6-phosphate and D-fructose 6-phosphate, respectively). Mediates the initial step of glycolysis by catalyzing phosphorylation of D-glucose to D-glucose 6-phosphate. Plays a key role in maintaining the integrity of the outer mitochondrial membrane by preventing the release of apoptogenic molecules from the intermembrane space and subsequent apoptosis. In Rattus norvegicus (Rat), this protein is Hexokinase-2.